A 297-amino-acid chain; its full sequence is Carboxysome assembly protein CcmO (297 aa).

The interval 1-29 (MPTSPTMTSVPIARSPRPSYQQINQHQPS) is disordered. A compositionally biased stretch (polar residues) spans 18–29 (PSYQQINQHQPS). BMC domains lie at 32-116 (ALGL…AVFP) and 138-222 (SIGL…HTLP).

This sequence belongs to the bacterial microcompartments protein family. As to quaternary structure, homooligomerizes, possibly as a trimer, interacts with CcmK in the carboxysome.

The protein resides in the carboxysome. In terms of biological role, required for formation of the carboxysome, a polyhedral inclusion where RuBisCO (ribulose bisphosphate carboxylase, rbcL-rbcS) is sequestered. Required for recruitment of major shell protein CcmK2 to the pre-carboxysome. Suggested to be a carboxysome shell protein. This is Carboxysome assembly protein CcmO from Synechocystis sp. (strain ATCC 27184 / PCC 6803 / Kazusa).